A 312-amino-acid chain; its full sequence is tRNA dimethylallyltransferase (312 aa).

13 to 20 (GPTAAGKT) is an ATP binding site. A substrate-binding site is contributed by 15 to 20 (TAAGKT). Interaction with substrate tRNA regions lie at residues 38 to 41 (DSAM), 162 to 166 (QRLLR), and 244 to 249 (RCVGYR).

Belongs to the IPP transferase family. In terms of assembly, monomer. Requires Mg(2+) as cofactor.

It carries out the reaction adenosine(37) in tRNA + dimethylallyl diphosphate = N(6)-dimethylallyladenosine(37) in tRNA + diphosphate. Functionally, catalyzes the transfer of a dimethylallyl group onto the adenine at position 37 in tRNAs that read codons beginning with uridine, leading to the formation of N6-(dimethylallyl)adenosine (i(6)A). In Chromohalobacter salexigens (strain ATCC BAA-138 / DSM 3043 / CIP 106854 / NCIMB 13768 / 1H11), this protein is tRNA dimethylallyltransferase.